The sequence spans 408 residues: 3-hydroxy-3-methylglutaryl-coenzyme A reductase (408 aa).

Residues Glu101 and Asp307 each act as charge relay system in the active site. His403 (proton donor) is an active-site residue.

The protein belongs to the HMG-CoA reductase family.

The catalysed reaction is (R)-mevalonate + 2 NADP(+) + CoA = (3S)-3-hydroxy-3-methylglutaryl-CoA + 2 NADPH + 2 H(+). Its pathway is metabolic intermediate biosynthesis; (R)-mevalonate biosynthesis; (R)-mevalonate from acetyl-CoA: step 3/3. Its function is as follows. Converts HMG-CoA to mevalonate. This is 3-hydroxy-3-methylglutaryl-coenzyme A reductase (hmgA) from Pyrococcus abyssi (strain GE5 / Orsay).